The sequence spans 1153 residues: Cingulin (1153 aa).

The tract at residues 1–342 (MAEPRGPVDH…LVMTTGSAKV (342 aa)) is head. The tract at residues 17–37 (ITEPAGDAQMRTGRRPAKDAR) is disordered. The ZIM motif lies at 38 to 52 (ANTYGVAVRVQGIAG). The interaction with TJP1/ZO1 stretch occupies residues 44 to 57 (AVRVQGIAGQPFVV). Phosphoserine occurs at positions 86, 126, 128, 131, 146, 205, 208, and 324. Disordered regions lie at residues 131-151 (SLLG…LELG) and 177-253 (DRHQ…SRAR). Residues 207-220 (DSRHLRDPPEDRRS) show a composition bias toward basic and acidic residues. Residues 343 to 1110 (LAGQGELAQK…ALEKDSWRKA (768 aa)) adopt a coiled-coil conformation. Lysine 562 is modified (N6-acetyllysine). Disordered regions lie at residues 755 to 796 (AQRG…QKRL), 823 to 861 (QSQL…LSRL), and 1110 to 1131 (AARS…EEFD). 2 stretches are compositionally biased toward basic and acidic residues: residues 772 to 796 (ALEE…QKRL) and 827 to 853 (EDYK…EAEK). The interval 1111-1153 (ARSAAESSLQQEGLSSDEEFDGVYNPNSIASLLTESGLQTSSC) is tail. Residues 1115-1124 (AESSLQQEGL) show a composition bias toward polar residues. 2 positions are modified to phosphoserine: serine 1125 and serine 1126.

It belongs to the cingulin family. As to quaternary structure, homodimer. Interacts with TJP1/ZO1 and SPEF1.

It is found in the cell junction. The protein localises to the tight junction. Functionally, probably plays a role in the formation and regulation of the tight junction (TJ) paracellular permeability barrier. The polypeptide is Cingulin (Sorex araneus (Eurasian common shrew)).